Consider the following 323-residue polypeptide: MVSVNLSSLPIVLDMINRNDDLNIQVIKLENGATVLDCGVNVTGSFEAGKLFTKICLGGLAHVGISISGTLDNKMVLPCVKVKTSHPAVATLGAQKAGWSVSVGKYFAMGSGPARALAMMPKVTYEEIEYRDDADVAILCLEASKLPDEKVADYVAQKCGVDVSKVYLLVAPTASIVGAVQISGRVVENGTYKMLEALHFDVRKVKLAAGIAPIAPIIGDDLKMMGATNDMVLYGGRTFYYIKSDEGDDIEALCKSLPSCSAQTYGKPFLEVFKEANYDFYKIDKGMFAPAVVTINDLRTGKLVTHGNTNIDVLKKSLKYTEI.

Belongs to the MCH family.

It localises to the cytoplasm. It carries out the reaction 5,10-methenyl-5,6,7,8-tetrahydromethanopterin + H2O = N(5)-formyl-5,6,7,8-tetrahydromethanopterin + H(+). The protein operates within one-carbon metabolism; methanogenesis from CO(2); 5,10-methenyl-5,6,7,8-tetrahydromethanopterin from CO(2): step 3/3. In terms of biological role, catalyzes the reversible interconversion of 5-formyl-H(4)MPT to methenyl-H(4)MPT(+). This Methanococcus vannielii (strain ATCC 35089 / DSM 1224 / JCM 13029 / OCM 148 / SB) protein is Methenyltetrahydromethanopterin cyclohydrolase.